We begin with the raw amino-acid sequence, 572 residues long: Proline--tRNA ligase (572 aa).

Belongs to the class-II aminoacyl-tRNA synthetase family. ProS type 1 subfamily. Homodimer.

It is found in the cytoplasm. It catalyses the reaction tRNA(Pro) + L-proline + ATP = L-prolyl-tRNA(Pro) + AMP + diphosphate. Its function is as follows. Catalyzes the attachment of proline to tRNA(Pro) in a two-step reaction: proline is first activated by ATP to form Pro-AMP and then transferred to the acceptor end of tRNA(Pro). As ProRS can inadvertently accommodate and process non-cognate amino acids such as alanine and cysteine, to avoid such errors it has two additional distinct editing activities against alanine. One activity is designated as 'pretransfer' editing and involves the tRNA(Pro)-independent hydrolysis of activated Ala-AMP. The other activity is designated 'posttransfer' editing and involves deacylation of mischarged Ala-tRNA(Pro). The misacylated Cys-tRNA(Pro) is not edited by ProRS. This is Proline--tRNA ligase from Yersinia pseudotuberculosis serotype IB (strain PB1/+).